The following is a 144-amino-acid chain: D-aminoacyl-tRNA deacylase (144 aa).

Positions 136-137 (GP) match the Gly-cisPro motif, important for rejection of L-amino acids motif.

It belongs to the DTD family. In terms of assembly, homodimer.

Its subcellular location is the cytoplasm. It carries out the reaction glycyl-tRNA(Ala) + H2O = tRNA(Ala) + glycine + H(+). The enzyme catalyses a D-aminoacyl-tRNA + H2O = a tRNA + a D-alpha-amino acid + H(+). Functionally, an aminoacyl-tRNA editing enzyme that deacylates mischarged D-aminoacyl-tRNAs. Also deacylates mischarged glycyl-tRNA(Ala), protecting cells against glycine mischarging by AlaRS. Acts via tRNA-based rather than protein-based catalysis; rejects L-amino acids rather than detecting D-amino acids in the active site. By recycling D-aminoacyl-tRNA to D-amino acids and free tRNA molecules, this enzyme counteracts the toxicity associated with the formation of D-aminoacyl-tRNA entities in vivo and helps enforce protein L-homochirality. In Aliivibrio salmonicida (strain LFI1238) (Vibrio salmonicida (strain LFI1238)), this protein is D-aminoacyl-tRNA deacylase.